Reading from the N-terminus, the 252-residue chain is tRNA (guanine-N(1)-)-methyltransferase (252 aa).

S-adenosyl-L-methionine-binding positions include Gly-118 and 138–143 (IGDYVL).

The protein belongs to the RNA methyltransferase TrmD family. Homodimer.

The protein localises to the cytoplasm. The catalysed reaction is guanosine(37) in tRNA + S-adenosyl-L-methionine = N(1)-methylguanosine(37) in tRNA + S-adenosyl-L-homocysteine + H(+). Functionally, specifically methylates guanosine-37 in various tRNAs. This is tRNA (guanine-N(1)-)-methyltransferase from Pseudomonas aeruginosa (strain UCBPP-PA14).